The sequence spans 252 residues: Small ribosomal subunit protein eS1A (252 aa).

Residue A2 is modified to N-acetylalanine; partial.

It belongs to the eukaryotic ribosomal protein eS1 family. Component of the small ribosomal subunit (SSU). Mature yeast ribosomes consist of a small (40S) and a large (60S) subunit. The 40S small subunit contains 1 molecule of ribosomal RNA (18S rRNA) and at least 33 different proteins. The large 60S subunit contains 3 rRNA molecules (25S, 5.8S and 5S rRNA) and at least 46 different proteins. eS1 interacts directly with uS11 and eS26, which form part of the mRNA exit tunnel.

Its subcellular location is the cytoplasm. In terms of biological role, component of the ribosome, a large ribonucleoprotein complex responsible for the synthesis of proteins in the cell. The small ribosomal subunit (SSU) binds messenger RNAs (mRNAs) and translates the encoded message by selecting cognate aminoacyl-transfer RNA (tRNA) molecules. The large subunit (LSU) contains the ribosomal catalytic site termed the peptidyl transferase center (PTC), which catalyzes the formation of peptide bonds, thereby polymerizing the amino acids delivered by tRNAs into a polypeptide chain. The nascent polypeptides leave the ribosome through a tunnel in the LSU and interact with protein factors that function in enzymatic processing, targeting, and the membrane insertion of nascent chains at the exit of the ribosomal tunnel. The protein is Small ribosomal subunit protein eS1A (rps101) of Schizosaccharomyces pombe (strain 972 / ATCC 24843) (Fission yeast).